Here is a 208-residue protein sequence, read N- to C-terminus: FMN-dependent NADH:quinone oxidoreductase 1 (208 aa).

FMN is bound by residues S10, 15-17 (SES), and 97-100 (MWNF).

The protein belongs to the azoreductase type 1 family. As to quaternary structure, homodimer. FMN serves as cofactor.

It catalyses the reaction 2 a quinone + NADH + H(+) = 2 a 1,4-benzosemiquinone + NAD(+). The enzyme catalyses N,N-dimethyl-1,4-phenylenediamine + anthranilate + 2 NAD(+) = 2-(4-dimethylaminophenyl)diazenylbenzoate + 2 NADH + 2 H(+). Its function is as follows. Quinone reductase that provides resistance to thiol-specific stress caused by electrophilic quinones. In terms of biological role, also exhibits azoreductase activity. Catalyzes the reductive cleavage of the azo bond in aromatic azo compounds to the corresponding amines. The chain is FMN-dependent NADH:quinone oxidoreductase 1 from Bradyrhizobium diazoefficiens (strain JCM 10833 / BCRC 13528 / IAM 13628 / NBRC 14792 / USDA 110).